The following is a 651-amino-acid chain: Probable export ATP-binding/permease protein Pfl01_2215 (651 aa).

The region spanning 6–244 (LQLTGISRSF…LSNEDAVPKS (239 aa)) is the ABC transporter domain. 42-49 (GASGSGKS) contacts ATP. Transmembrane regions (helical) follow at residues 250–270 (LVAS…ALIS), 276–296 (LLTM…SAIG), 524–544 (LALL…IGVM), 585–605 (LGGA…SLFI), and 614–634 (LTSV…FGFV).

This sequence belongs to the ABC transporter superfamily. Macrolide exporter (TC 3.A.1.122) family. In terms of assembly, probably part of a tripartite efflux system, which is composed of an inner membrane transporter, a periplasmic membrane fusion protein, and an outer membrane component.

Its subcellular location is the cell inner membrane. In terms of biological role, probably part of a tripartite efflux system. This is Probable export ATP-binding/permease protein Pfl01_2215 from Pseudomonas fluorescens (strain Pf0-1).